Here is a 1116-residue protein sequence, read N- to C-terminus: Auxin response factor 21 (1116 aa).

Residues 132–234 (FCKTLTASDT…QLLLGIRRAN (103 aa)) constitute a DNA-binding region (TF-B3). Residues 763–812 (KTDDVPSTSTSPSTNSNPVLLQSIPSSSKNQSLTTAGKTSQSSVVLGPTI) form a disordered region. A compositionally biased stretch (low complexity) spans 768–780 (PSTSTSPSTNSNP). Residues 781 to 806 (VLLQSIPSSSKNQSLTTAGKTSQSSV) show a composition bias toward polar residues. The PB1 domain occupies 998 to 1082 (RTYTKVHKRG…RCIRILSPQE (85 aa)).

The protein belongs to the ARF family. As to quaternary structure, homodimers and heterodimers. Expressed in roots, culms, leaves and young panicles.

The protein resides in the nucleus. Auxin response factors (ARFs) are transcriptional factors that bind specifically to the DNA sequence 5'-TGTCTC-3' found in the auxin-responsive promoter elements (AuxREs). This chain is Auxin response factor 21 (ARF21), found in Oryza sativa subsp. japonica (Rice).